The sequence spans 421 residues: Probable tRNA N6-adenosine threonylcarbamoyltransferase, mitochondrial (421 aa).

The N-terminal 22 residues, 1–22 (MNIPKILNNNLVLKRIFCRNYS), are a transit peptide targeting the mitochondrion. Positions 133 and 137 each coordinate a divalent metal cation. Substrate is bound by residues 156–160 (LLSGG), aspartate 189, glycine 208, glutamate 212, 308–309 (AN), and threonine 336. Aspartate 337 contributes to the a divalent metal cation binding site.

It belongs to the KAE1 / TsaD family. Homodimer. Requires a divalent metal cation as cofactor.

It is found in the mitochondrion. The catalysed reaction is L-threonylcarbamoyladenylate + adenosine(37) in tRNA = N(6)-L-threonylcarbamoyladenosine(37) in tRNA + AMP + H(+). In terms of biological role, required for the formation of a threonylcarbamoyl group on adenosine at position 37 (t(6)A37) in mitochondrial tRNAs that read codons beginning with adenine. Probably involved in the transfer of the threonylcarbamoyl moiety of threonylcarbamoyl-AMP (TC-AMP) to the N6 group of A37. Involved in mitochondrial genome maintenance. The protein is Probable tRNA N6-adenosine threonylcarbamoyltransferase, mitochondrial of Caenorhabditis elegans.